The primary structure comprises 251 residues: V-set and transmembrane domain-containing protein 2B (251 aa).

Positions 1–25 (MEKQGLFSALCYLMLNTPLLFSVNA) are cleaved as a signal peptide. Positions 26–142 (TFTEVPKDVT…DETQEHKAQA (117 aa)) constitute an Ig-like V-type domain. The Extracellular portion of the chain corresponds to 26-226 (TFTEVPKDVT…RQQHGSGTGP (201 aa)). The cysteines at positions 46 and 125 are disulfide-linked. The segment at 157–213 (AAEAVSHIQSSGPRRNNPSSRATPEPGNKRAVPPAENLAPSLSTAASSSASPAPGKA) is disordered. Composition is skewed to low complexity over residues 166 to 177 (SSGPRRNNPSSR) and 195 to 213 (APSL…PGKA). The helical transmembrane segment at 227–247 (IFANDPALYMFLLIFHQLVYL) threads the bilayer. The Cytoplasmic segment spans residues 248-251 (LLNH).

Its subcellular location is the membrane. In Xenopus tropicalis (Western clawed frog), this protein is V-set and transmembrane domain-containing protein 2B (vstm2b).